The following is a 255-amino-acid chain: PABIR family member 2 (255 aa).

Positions 1 to 24 (MAQEKMDLDFEADTSEGATLRRSN) are disordered. A2 carries the N-acetylalanine modification. Phosphoserine occurs at positions 25, 33, 50, and 58. T112 is modified (phosphothreonine). A phosphoserine mark is found at S115 and S119. R122 bears the Omega-N-methylarginine mark. Position 145 is a phosphoserine (S145). Disordered regions lie at residues 169–196 (LGPL…SMLS) and 219–238 (SGLS…SPVA). Residues 174–184 (RKGEMEMESQP) show a composition bias toward basic and acidic residues.

It belongs to the FAM122 family.

This Mus musculus (Mouse) protein is PABIR family member 2.